Consider the following 504-residue polypeptide: Lysine--tRNA ligase (504 aa).

2 residues coordinate Mg(2+): glutamate 411 and glutamate 418.

Belongs to the class-II aminoacyl-tRNA synthetase family. As to quaternary structure, homodimer. It depends on Mg(2+) as a cofactor.

Its subcellular location is the cytoplasm. It carries out the reaction tRNA(Lys) + L-lysine + ATP = L-lysyl-tRNA(Lys) + AMP + diphosphate. The sequence is that of Lysine--tRNA ligase from Clostridium botulinum (strain Loch Maree / Type A3).